Consider the following 38-residue polypeptide: Photosystem II reaction center protein M (38 aa).

Residues 5–25 (ILGLIATALFIVIPTSFLLIL) form a helical membrane-spanning segment.

It belongs to the PsbM family. PSII is composed of 1 copy each of membrane proteins PsbA, PsbB, PsbC, PsbD, PsbE, PsbF, PsbH, PsbI, PsbJ, PsbK, PsbL, PsbM, PsbT, PsbX, PsbY, PsbZ, Psb30/Ycf12, at least 3 peripheral proteins of the oxygen-evolving complex and a large number of cofactors. It forms dimeric complexes.

Its subcellular location is the plastid. The protein localises to the cyanelle thylakoid membrane. One of the components of the core complex of photosystem II (PSII). PSII is a light-driven water:plastoquinone oxidoreductase that uses light energy to abstract electrons from H(2)O, generating O(2) and a proton gradient subsequently used for ATP formation. It consists of a core antenna complex that captures photons, and an electron transfer chain that converts photonic excitation into a charge separation. This subunit is found at the monomer-monomer interface. The polypeptide is Photosystem II reaction center protein M (Cyanophora paradoxa).